The chain runs to 3317 residues: Cadherin-23 (3317 aa).

The first 23 residues, 1-23 (MRHPPVTWCAMLWLLMLVSGSWG), serve as a signal peptide directing secretion. Residues 24–3062 (QVNRLPFFTN…SVQLPDDMSA (3039 aa)) lie on the Extracellular side of the membrane. Cadherin domains follow at residues 34 to 132 (HFFD…APTF), 133 to 236 (HNQP…DPIF), 237 to 348 (INLP…APEF), 349 to 458 (NSSE…RPIF), 459 to 559 (SQPL…VPTF), 560 to 669 (QKDA…PPTF), 670 to 782 (SKPA…APYY), 777 to 888 (KDAP…DPTF), 889 to 993 (QNLP…TPTF), 994 to 1100 (FPAV…RPIF), 1101 to 1206 (LQSS…APVF), 1208 to 1311 (QQQY…AVQF), 1312 to 1416 (SNAS…SPRF), 1418 to 1525 (FTSD…PPVI), 1527 to 1632 (SPFG…APVF), 1633 to 1742 (QQPH…VPTF), 1743 to 1849 (PRDY…DPVL), 1850 to 1957 (LNLP…HPLF), 1958 to 2067 (TEGT…WPTF), 2068 to 2172 (SPPA…RPEF), 2173 to 2291 (LNPI…TPQF), 2295 to 2400 (GITY…NPIF), 2401 to 2507 (DQLS…RPQF), 2508 to 2609 (SKPQ…RPVF), 2612 to 2720 (PPNG…EPLF), 2727 to 2844 (SPQY…PPRF), and 2845 to 2973 (TKAE…EEEF). Asn-155 and Asn-206 each carry an N-linked (GlcNAc...) asparagine glycan. 32 N-linked (GlcNAc...) asparagine glycosylation sites follow: Asn-349, Asn-391, Asn-432, Asn-464, Asn-470, Asn-600, Asn-692, Asn-763, Asn-808, Asn-825, Asn-939, Asn-999, Asn-1016, Asn-1169, Asn-1280, Asn-1313, Asn-1471, Asn-1532, Asn-1649, Asn-1665, Asn-1816, Asn-1855, Asn-1887, Asn-1900, Asn-2012, Asn-2048, Asn-2127, Asn-2166, Asn-2193, Asn-2261, Asn-2355, and Asn-2367. 8 N-linked (GlcNAc...) asparagine glycosylation sites follow: Asn-2576, Asn-2614, Asn-2747, Asn-2806, Asn-2875, Asn-2894, Asn-2939, and Asn-2979. A helical transmembrane segment spans residues 3063–3083 (LQMAIIVLAILLFLAAMLFVL). The Cytoplasmic portion of the chain corresponds to 3084 to 3317 (MNWYYRTIHK…MESPLEITEL (234 aa)).

Antiparallel heterodimer with PCDH15. Interacts with USH1C and USH1G.

It localises to the cell membrane. Cadherins are calcium-dependent cell adhesion proteins. They preferentially interact with themselves in a homophilic manner in connecting cells. CDH23 is required for establishing and/or maintaining the proper organization of the stereocilia bundle of hair cells in the cochlea and the vestibule during late embryonic/early postnatal development. It is part of the functional network formed by USH1C, USH1G, CDH23 and MYO7A that mediates mechanotransduction in cochlear hair cells. Required for normal hearing. In Rattus norvegicus (Rat), this protein is Cadherin-23 (Cdh23).